The following is a 286-amino-acid chain: uncharacterized protein (286 aa).

The AB hydrolase-1 domain maps to 26–268 (PLIILCHGFC…DACHYDIYEG (243 aa)).

The protein to E.coli YcjY.

This is an uncharacterized protein from Escherichia coli.